Reading from the N-terminus, the 641-residue chain is 1-deoxy-D-xylulose-5-phosphate synthase (641 aa).

Thiamine diphosphate is bound by residues His80 and 121 to 123; that span reads GHS. Residue Asp152 coordinates Mg(2+). Residues 153-154, Asn181, Tyr290, and Glu372 contribute to the thiamine diphosphate site; that span reads GS. Residue Asn181 coordinates Mg(2+).

Belongs to the transketolase family. DXPS subfamily. In terms of assembly, homodimer. Mg(2+) serves as cofactor. It depends on thiamine diphosphate as a cofactor.

The catalysed reaction is D-glyceraldehyde 3-phosphate + pyruvate + H(+) = 1-deoxy-D-xylulose 5-phosphate + CO2. The protein operates within metabolic intermediate biosynthesis; 1-deoxy-D-xylulose 5-phosphate biosynthesis; 1-deoxy-D-xylulose 5-phosphate from D-glyceraldehyde 3-phosphate and pyruvate: step 1/1. Functionally, catalyzes the acyloin condensation reaction between C atoms 2 and 3 of pyruvate and glyceraldehyde 3-phosphate to yield 1-deoxy-D-xylulose-5-phosphate (DXP). The chain is 1-deoxy-D-xylulose-5-phosphate synthase from Rhodobacter capsulatus (Rhodopseudomonas capsulata).